A 496-amino-acid chain; its full sequence is Glycerol kinase (496 aa).

Threonine 11 contacts ADP. Threonine 11, serine 12, and serine 13 together coordinate ATP. Residue threonine 11 coordinates sn-glycerol 3-phosphate. Position 15 (arginine 15) interacts with ADP. Arginine 81, glutamate 82, tyrosine 133, and aspartate 242 together coordinate sn-glycerol 3-phosphate. 5 residues coordinate glycerol: arginine 81, glutamate 82, tyrosine 133, aspartate 242, and glutamine 243. Residues threonine 264 and glycine 307 each coordinate ADP. ATP-binding residues include threonine 264, glycine 307, glutamine 311, and glycine 412. ADP-binding residues include glycine 412 and asparagine 416.

This sequence belongs to the FGGY kinase family.

The catalysed reaction is glycerol + ATP = sn-glycerol 3-phosphate + ADP + H(+). It participates in polyol metabolism; glycerol degradation via glycerol kinase pathway; sn-glycerol 3-phosphate from glycerol: step 1/1. Inhibited by fructose 1,6-bisphosphate (FBP). Functionally, key enzyme in the regulation of glycerol uptake and metabolism. Catalyzes the phosphorylation of glycerol to yield sn-glycerol 3-phosphate. The chain is Glycerol kinase from Albidiferax ferrireducens (strain ATCC BAA-621 / DSM 15236 / T118) (Rhodoferax ferrireducens).